The chain runs to 920 residues: Isoleucine--tRNA ligase (920 aa).

The 'HIGH' region signature appears at 58-68 (PYANGHLHLGH). An L-isoleucyl-5'-AMP-binding site is contributed by Glu569. A 'KMSKS' region motif is present at residues 610-614 (KMSKS). Residue Lys613 coordinates ATP. Zn(2+)-binding residues include Cys895, Cys898, Cys910, and Cys913.

This sequence belongs to the class-I aminoacyl-tRNA synthetase family. IleS type 1 subfamily. As to quaternary structure, monomer. Zn(2+) is required as a cofactor.

The protein resides in the cytoplasm. The enzyme catalyses tRNA(Ile) + L-isoleucine + ATP = L-isoleucyl-tRNA(Ile) + AMP + diphosphate. In terms of biological role, catalyzes the attachment of isoleucine to tRNA(Ile). As IleRS can inadvertently accommodate and process structurally similar amino acids such as valine, to avoid such errors it has two additional distinct tRNA(Ile)-dependent editing activities. One activity is designated as 'pretransfer' editing and involves the hydrolysis of activated Val-AMP. The other activity is designated 'posttransfer' editing and involves deacylation of mischarged Val-tRNA(Ile). The polypeptide is Isoleucine--tRNA ligase (Helicobacter pylori (strain ATCC 700392 / 26695) (Campylobacter pylori)).